Here is a 226-residue protein sequence, read N- to C-terminus: 3-dehydroquinate dehydratase (226 aa).

Residues Glu33 to Arg35 and Arg65 contribute to the 3-dehydroquinate site. Residue His121 is the Proton donor/acceptor of the active site. Residue Lys146 is the Schiff-base intermediate with substrate of the active site. 3-dehydroquinate contacts are provided by Arg188, Ser207, and Gln211.

This sequence belongs to the type-I 3-dehydroquinase family. As to quaternary structure, homodimer.

It catalyses the reaction 3-dehydroquinate = 3-dehydroshikimate + H2O. It participates in metabolic intermediate biosynthesis; chorismate biosynthesis; chorismate from D-erythrose 4-phosphate and phosphoenolpyruvate: step 3/7. Functionally, involved in the third step of the chorismate pathway, which leads to the biosynthesis of aromatic amino acids. Catalyzes the cis-dehydration of 3-dehydroquinate (DHQ) and introduces the first double bond of the aromatic ring to yield 3-dehydroshikimate. This Lactococcus lactis subsp. lactis (strain IL1403) (Streptococcus lactis) protein is 3-dehydroquinate dehydratase.